A 243-amino-acid chain; its full sequence is MTTLFISDLHLTPSRTDITECFVQFMRNEAVNAEALYVLGDLFEFWIGDEDCTPFAERIRNEFKALTTSGVPVYFIQGNRDFLLGQRFCRETGITLLDDVCTIDLYGEKVVILHGDTLCIDDLKYQEFRKTVHQPWLQWIFKRIPWFIKKRIVAKVQSGVRDDKQHKSLEIMDVNQQEVAQVMSQFCVKLMIHGHTHRPNIHHFEHDNLPLTRIVLGDWYSQGSVLKVTADGYSLEQRPFFTE.

Residues D8, H10, D41, N79, and H114 each coordinate Mn(2+). 79-80 (NR) provides a ligand contact to substrate. Substrate is bound by residues D122, K164, K167, and H195. 2 residues coordinate Mn(2+): H195 and H197.

This sequence belongs to the LpxH family. The cofactor is Mn(2+).

Its subcellular location is the cell inner membrane. The enzyme catalyses UDP-2-N,3-O-bis[(3R)-3-hydroxytetradecanoyl]-alpha-D-glucosamine + H2O = 2-N,3-O-bis[(3R)-3-hydroxytetradecanoyl]-alpha-D-glucosaminyl 1-phosphate + UMP + 2 H(+). Its pathway is glycolipid biosynthesis; lipid IV(A) biosynthesis; lipid IV(A) from (3R)-3-hydroxytetradecanoyl-[acyl-carrier-protein] and UDP-N-acetyl-alpha-D-glucosamine: step 4/6. Its function is as follows. Hydrolyzes the pyrophosphate bond of UDP-2,3-diacylglucosamine to yield 2,3-diacylglucosamine 1-phosphate (lipid X) and UMP by catalyzing the attack of water at the alpha-P atom. Involved in the biosynthesis of lipid A, a phosphorylated glycolipid that anchors the lipopolysaccharide to the outer membrane of the cell. This Vibrio vulnificus (strain YJ016) protein is UDP-2,3-diacylglucosamine hydrolase.